We begin with the raw amino-acid sequence, 355 residues long: Heterogeneous nuclear ribonucleoprotein D0 (355 aa).

Residues 1–92 (MSEEQFGGDG…SPRHSEAATA (92 aa)) form a disordered region. At S2 the chain carries N-acetylserine. Composition is skewed to low complexity over residues 11 to 20 (AAAAATAAVG) and 27 to 42 (EGAMVAATQGAAAAAG). The segment covering 43 to 58 (SGAGTGGGTASGGTEG) has biased composition (gly residues). The span at 64–73 (EGAKIDASKN) shows a compositional bias: basic and acidic residues. Residue S71 is modified to Phosphoserine. A Glycyl lysine isopeptide (Lys-Gly) (interchain with G-Cter in SUMO2) cross-link involves residue K72. Residues S80, S82, and S83 each carry the phosphoserine modification. T91 carries the post-translational modification Phosphothreonine. RRM domains are found at residues 97 to 179 (WKMF…KTKE) and 182 to 261 (KKIF…MSKE). An N6-methyllysine modification is found at K119. Residue T127 is modified to Phosphothreonine. K129 participates in a covalent cross-link: Glycyl lysine isopeptide (Lys-Gly) (interchain with G-Cter in SUMO2). K165 carries the post-translational modification N6-acetyllysine. The residue at position 190 (S190) is a Phosphoserine. T193 is modified (phosphothreonine). A Glycyl lysine isopeptide (Lys-Gly) (interchain with G-Cter in SUMO2) cross-link involves residue K197. N6-acetyllysine occurs at positions 243 and 251. Y263 is modified (omega-N-methylarginine). S271 carries the phosphoserine modification. At R272 the chain carries Omega-N-methylarginine. Residue G273 is modified to N6-acetyllysine. 3 positions are modified to omega-N-methylarginine: R278, R280, and R282. An N6-acetyllysine modification is found at Q292. R345 carries the post-translational modification Asymmetric dimethylarginine; alternate. Residue R345 is modified to Dimethylated arginine; alternate. R345 bears the Omega-N-methylarginine; alternate mark.

In terms of assembly, identified in a IGF2BP1-dependent mRNP granule complex containing untranslated mRNAs. Part of a complex associated with the FOS mCRD domain and consisting of PABPC1, PAIP1, CSDE1/UNR and SYNCRIP. Interacts with IGF2BP2. Interacts with GTPBP1. Interacts with EIF4G1; the interaction requires RNA. Interacts with EIF3B and RPS3. In terms of processing, arg-345 is dimethylated, probably to asymmetric dimethylarginine. Post-translationally, methylated by PRMT1, in an insulin-dependent manner. The PRMT1-mediated methylation regulates tyrosine phosphorylation.

It localises to the nucleus. Its subcellular location is the cytoplasm. In terms of biological role, binds with high affinity to RNA molecules that contain AU-rich elements (AREs) found within the 3'-UTR of many proto-oncogenes and cytokine mRNAs. Also binds to double- and single-stranded DNA sequences in a specific manner and functions a transcription factor. Each of the RNA-binding domains specifically can bind solely to a single-stranded non-monotonous 5'-UUAG-3' sequence and also weaker to the single-stranded 5'-TTAGGG-3' telomeric DNA repeat. Binds RNA oligonucleotides with 5'-UUAGGG-3' repeats more tightly than the telomeric single-stranded DNA 5'-TTAGGG-3' repeats. Binding of RRM1 to DNA inhibits the formation of DNA quadruplex structure which may play a role in telomere elongation. May be involved in translationally coupled mRNA turnover. Implicated with other RNA-binding proteins in the cytoplasmic deadenylation/translational and decay interplay of the FOS mRNA mediated by the major coding-region determinant of instability (mCRD) domain. May play a role in the regulation of the rhythmic expression of circadian clock core genes. Directly binds to the 3'UTR of CRY1 mRNA and induces CRY1 rhythmic translation. May also be involved in the regulation of PER2 translation. The protein is Heterogeneous nuclear ribonucleoprotein D0 (HNRNPD) of Homo sapiens (Human).